A 72-amino-acid chain; its full sequence is UPF0270 protein Ent638_3781 (72 aa).

The protein belongs to the UPF0270 family.

The sequence is that of UPF0270 protein Ent638_3781 from Enterobacter sp. (strain 638).